We begin with the raw amino-acid sequence, 169 residues long: Endoribonuclease YbeY (169 aa).

The tract at residues 72–95 (GPVAAPRQEPDSPPACRKDSSHAE) is disordered. His131, His135, and His141 together coordinate Zn(2+).

Belongs to the endoribonuclease YbeY family. It depends on Zn(2+) as a cofactor.

The protein localises to the cytoplasm. Functionally, single strand-specific metallo-endoribonuclease involved in late-stage 70S ribosome quality control and in maturation of the 3' terminus of the 16S rRNA. This chain is Endoribonuclease YbeY, found in Oleidesulfovibrio alaskensis (strain ATCC BAA-1058 / DSM 17464 / G20) (Desulfovibrio alaskensis).